The primary structure comprises 266 residues: 2-Cys peroxiredoxin BAS1, chloroplastic (266 aa).

Over residues 1-16 (MASVASSTTLISSPSS) the composition is skewed to low complexity. Residues 1-25 (MASVASSTTLISSPSSRVFPAKSSL) are disordered. Residues 1–65 (MASVASSTTL…SSTSRRSFAV (65 aa)) constitute a chloroplast transit peptide. Residues 73 to 232 (PLVGNKAPDF…TMRTLQALQY (160 aa)) enclose the Thioredoxin domain. Residue C119 is the Cysteine sulfenic acid (-SOH) intermediate of the active site.

The protein belongs to the peroxiredoxin family. AhpC/Prx1 subfamily. As to quaternary structure, homodimer; disulfide-linked, upon oxidation. Interacts with the plastidial thioredoxin CDSP32. Interacts with the plastidial NADPH-dependent thioredoxin reductase ANTR-C.

It is found in the plastid. Its subcellular location is the chloroplast. It carries out the reaction a hydroperoxide + [thioredoxin]-dithiol = an alcohol + [thioredoxin]-disulfide + H2O. In terms of biological role, thiol-specific peroxidase that catalyzes the reduction of hydrogen peroxide and organic hydroperoxides to water and alcohols, respectively. Plays a role in cell protection against oxidative stress by detoxifying peroxides. May be an antioxidant enzyme particularly in the developing shoot and photosynthesizing leaf. The sequence is that of 2-Cys peroxiredoxin BAS1, chloroplastic (BAS1) from Arabidopsis thaliana (Mouse-ear cress).